Here is a 21-residue protein sequence, read N- to C-terminus: Tertiapin (21 aa).

Intrachain disulfides connect cysteine 3-cysteine 14 and cysteine 5-cysteine 18.

Post-translationally, oxidation of Met-13 results in the loss of biological activity. An amidation at Lys-21 is suggested in Ref.1. Expressed by the venom gland.

The protein resides in the secreted. Its function is as follows. Presynaptic neurotoxin that blocks the inwardly rectifying Kir1.1/KCNJ1 and Kir3.1/3.4 (KCNJ3/KCNJ5) potassium channels with high affinity by binding to the M1-M2 linker region of these channels in a 1:1 stoichiometry. It may block the potassium channel pore by occluding its alpha helix into the channel vestibule. Tertiapin-Q also inhibits calcium-activated large conductance BK-type (KCNMA) potassium channels in a concentration-, and voltage-dependent manner, in addition to inhibiting Kir3.1/3.2 (KCNJ3/KCNJ6) heteromultimers potassium channels. It can prevent dose-dependently acetylcholine(ACh)-induced atrioventricular blocks in mammalian hearts, as KCNJ3/KCNJ5 channels (also named I(KACh), because these channels are activated by ACh) are found in mammalian myocytes. Interacts specifically with calmodulin in the presence of calcium. The sequence is that of Tertiapin from Apis mellifera (Honeybee).